Here is a 567-residue protein sequence, read N- to C-terminus: D-lactate dehydrogenase [cytochrome], mitochondrial (567 aa).

The N-terminal 56 residues, Met1–Leu56, are a transit peptide targeting the mitochondrion. An FAD-binding PCMH-type domain is found at Ala142–Ile319.

Belongs to the FAD-binding oxidoreductase/transferase type 4 family. Homodimer. Requires FAD as cofactor. Expressed in leaves, stems, flowers and roots.

It is found in the mitochondrion. It catalyses the reaction (R)-lactate + 2 Fe(III)-[cytochrome c] = 2 Fe(II)-[cytochrome c] + pyruvate + 2 H(+). Inhibited by cyanide ions. Catalyzes the stereospecific oxidation of D-lactate to pyruvate. Involved in the detoxification of methylglyoxal and D-lactate, but probably not involved in the metabolization of glycolate. In Arabidopsis thaliana (Mouse-ear cress), this protein is D-lactate dehydrogenase [cytochrome], mitochondrial.